Here is a 154-residue protein sequence, read N- to C-terminus: 3-dehydroquinate dehydratase (154 aa).

Catalysis depends on Tyr23, which acts as the Proton acceptor. Positions 75, 81, and 88 each coordinate substrate. His101 acts as the Proton donor in catalysis. Substrate contacts are provided by residues 102–103 (LS) and Arg112.

This sequence belongs to the type-II 3-dehydroquinase family. Homododecamer.

The catalysed reaction is 3-dehydroquinate = 3-dehydroshikimate + H2O. The protein operates within metabolic intermediate biosynthesis; chorismate biosynthesis; chorismate from D-erythrose 4-phosphate and phosphoenolpyruvate: step 3/7. Its function is as follows. Catalyzes a trans-dehydration via an enolate intermediate. The sequence is that of 3-dehydroquinate dehydratase from Teredinibacter turnerae (strain ATCC 39867 / T7901).